The sequence spans 456 residues: Ribosomal protein uS12 methylthiotransferase RimO (456 aa).

Residues 11 to 126 (PKVGFVSLGC…VMQAVHTHLP (116 aa)) form the MTTase N-terminal domain. Positions 20, 56, 85, 157, 161, and 164 each coordinate [4Fe-4S] cluster. One can recognise a Radical SAM core domain in the interval 143-384 (LTPKHYAYLK…MEVAEEVSAR (242 aa)). The 70-residue stretch at 387-456 (QRKVGQTLRV…DGHDLWGEVA (70 aa)) folds into the TRAM domain.

It belongs to the methylthiotransferase family. RimO subfamily. The cofactor is [4Fe-4S] cluster.

The protein localises to the cytoplasm. The catalysed reaction is L-aspartate(89)-[ribosomal protein uS12]-hydrogen + (sulfur carrier)-SH + AH2 + 2 S-adenosyl-L-methionine = 3-methylsulfanyl-L-aspartate(89)-[ribosomal protein uS12]-hydrogen + (sulfur carrier)-H + 5'-deoxyadenosine + L-methionine + A + S-adenosyl-L-homocysteine + 2 H(+). Catalyzes the methylthiolation of an aspartic acid residue of ribosomal protein uS12. In Cupriavidus metallidurans (strain ATCC 43123 / DSM 2839 / NBRC 102507 / CH34) (Ralstonia metallidurans), this protein is Ribosomal protein uS12 methylthiotransferase RimO.